The following is a 174-amino-acid chain: Secretory-abundant heat soluble protein 2 (174 aa).

Positions 1 to 19 (MHRFVLALVVFAGAAIVWA) are cleaved as a signal peptide. The tract at residues 30 to 60 (EWTGKPWMGKWESDPSKDENVEEFKKKLQLP) is SAHS-c1. The SAHS-c2 stretch occupies residues 77 to 105 (YKKGDEYHHKIIINDAHYKNDIVFKLGQE). Residue asparagine 111 is glycosylated (N-linked (GlcNAc...) asparagine). The interval 118 to 172 (KYEDKDGALVGSVHYTGTKEQSLDKTINNVFKLEGDHLVKTSTIEGVTMKRHYNK) is SAHS-c3.

It belongs to the Secretory-abundant heat soluble protein (SAHS) family.

The protein resides in the secreted. In terms of biological role, secreted heat soluble protein acting as a molecular shield in water-deficient condition. Tardigrade-specific intrinsically disordered proteins (TDPs) are essential for desiccation tolerance by forming non-crystalline amorphous solids upon desiccation, and this vitrified state mirrors their protective capabilities. The sequence is that of Secretory-abundant heat soluble protein 2 from Ramazzottius varieornatus (Water bear).